We begin with the raw amino-acid sequence, 196 residues long: Carnitine operon protein CaiE (196 aa).

The segment at 173–196 (TQPLRQMEENRPRLQGTTDVTPKR) is disordered. Residues 187–196 (QGTTDVTPKR) show a composition bias toward polar residues.

This sequence belongs to the transferase hexapeptide repeat family.

It participates in amine and polyamine metabolism; carnitine metabolism. Overproduction of CaiE stimulates the activity of CaiB and CaiD. This Shigella dysenteriae serotype 1 (strain Sd197) protein is Carnitine operon protein CaiE.